The following is a 211-amino-acid chain: ATP-dependent Clp protease proteolytic subunit (211 aa).

The Nucleophile role is filled by serine 106. Histidine 131 is a catalytic residue.

Belongs to the peptidase S14 family. Fourteen ClpP subunits assemble into 2 heptameric rings which stack back to back to give a disk-like structure with a central cavity, resembling the structure of eukaryotic proteasomes.

It localises to the cytoplasm. It carries out the reaction Hydrolysis of proteins to small peptides in the presence of ATP and magnesium. alpha-casein is the usual test substrate. In the absence of ATP, only oligopeptides shorter than five residues are hydrolyzed (such as succinyl-Leu-Tyr-|-NHMec, and Leu-Tyr-Leu-|-Tyr-Trp, in which cleavage of the -Tyr-|-Leu- and -Tyr-|-Trp bonds also occurs).. Functionally, cleaves peptides in various proteins in a process that requires ATP hydrolysis. Has a chymotrypsin-like activity. Plays a major role in the degradation of misfolded proteins. The polypeptide is ATP-dependent Clp protease proteolytic subunit (Maricaulis maris (strain MCS10) (Caulobacter maris)).